The primary structure comprises 294 residues: Elongation factor Ts (294 aa).

Residues 82–85 (TDFV) are involved in Mg(2+) ion dislocation from EF-Tu.

The protein belongs to the EF-Ts family.

It localises to the cytoplasm. In terms of biological role, associates with the EF-Tu.GDP complex and induces the exchange of GDP to GTP. It remains bound to the aminoacyl-tRNA.EF-Tu.GTP complex up to the GTP hydrolysis stage on the ribosome. The sequence is that of Elongation factor Ts from Psychrobacter cryohalolentis (strain ATCC BAA-1226 / DSM 17306 / VKM B-2378 / K5).